We begin with the raw amino-acid sequence, 589 residues long: L-fucose isomerase (589 aa).

Catalysis depends on proton acceptor residues E340 and D364. Mn(2+) contacts are provided by E340, D364, and H527.

Belongs to the L-fucose isomerase family. It depends on Mn(2+) as a cofactor.

The protein localises to the cytoplasm. The enzyme catalyses L-fucose = L-fuculose. It participates in carbohydrate degradation; L-fucose degradation; L-lactaldehyde and glycerone phosphate from L-fucose: step 1/3. In terms of biological role, converts the aldose L-fucose into the corresponding ketose L-fuculose. The sequence is that of L-fucose isomerase from Haemophilus influenzae (strain ATCC 51907 / DSM 11121 / KW20 / Rd).